The chain runs to 308 residues: Serine/threonine-protein phosphatase 4 catalytic subunit (308 aa).

The Mn(2+) site is built by aspartate 51, histidine 53, aspartate 79, and asparagine 111. The active-site Proton donor is histidine 112. Positions 161 and 235 each coordinate Mn(2+). Leucine 308 carries the post-translational modification Leucine methyl ester.

The protein belongs to the PPP phosphatase family. PP-4 (PP-X) subfamily. In terms of assembly, catalytic subunit of the histone H2A phosphatase complex (HTP-C) containing PPH3, PSY2 and PSY4. The cofactor is Mn(2+).

The protein localises to the cytoplasm. The protein resides in the nucleus. It carries out the reaction O-phospho-L-seryl-[protein] + H2O = L-seryl-[protein] + phosphate. The enzyme catalyses O-phospho-L-threonyl-[protein] + H2O = L-threonyl-[protein] + phosphate. Functionally, forms the histone H2A phosphatase complex in association with the regulatory subunits PSY2 and PSY4, which dephosphorylates H2AS128ph (gamma-H2A) that has been displaced from sites of DNA lesions in the double-stranded DNA break repair process. Dephosphorylation is necessary for efficient recovery from the DNA damage checkpoint. This chain is Serine/threonine-protein phosphatase 4 catalytic subunit (PPH3), found in Kluyveromyces lactis (strain ATCC 8585 / CBS 2359 / DSM 70799 / NBRC 1267 / NRRL Y-1140 / WM37) (Yeast).